Here is a 198-residue protein sequence, read N- to C-terminus: Nucleoid occlusion factor SlmA (198 aa).

One can recognise an HTH tetR-type domain in the interval R9–L70. A DNA-binding region (H-T-H motif) is located at residues T33–F52. A coiled-coil region spans residues E117–R144.

This sequence belongs to the nucleoid occlusion factor SlmA family. Homodimer. Interacts with FtsZ.

It is found in the cytoplasm. The protein localises to the nucleoid. Required for nucleoid occlusion (NO) phenomenon, which prevents Z-ring formation and cell division over the nucleoid. Acts as a DNA-associated cell division inhibitor that binds simultaneously chromosomal DNA and FtsZ, and disrupts the assembly of FtsZ polymers. SlmA-DNA-binding sequences (SBS) are dispersed on non-Ter regions of the chromosome, preventing FtsZ polymerization at these regions. This chain is Nucleoid occlusion factor SlmA, found in Edwardsiella ictaluri (strain 93-146).